The primary structure comprises 976 residues: Chloride channel protein 1 (976 aa).

Topologically, residues 1–118 are cytoplasmic; the sequence is MQPSQSLRRG…VVRRKLGEDW (118 aa). Positions 71-92 are disordered; that stretch reads DKEQDTGMSKKMGSSESMDSKD. The segment covering 77–87 has biased composition (low complexity); it reads GMSKKMGSSES. A helical transmembrane segment spans residues 119 to 150; sequence IFLVLLGLLMALVSWSMDYVSAKSLQAYKWSY. Residues 151–158 lie on the Extracellular side of the membrane; that stretch reads YQMQPNLP. A helical membrane pass occupies residues 159–179; the sequence is LQYLVWVTFPLTLILFSAVFC. Topologically, residues 180–183 are cytoplasmic; sequence HLIS. An intramembrane region (note=Loop between two helices) is located at residues 184-189; sequence PQAVGS. Residues 188 to 192 carry the Selectivity filter part_1 motif; the sequence is GSGIP. Position 189 (Ser-189) interacts with chloride. Residues 190-195 constitute an intramembrane region (helical); it reads GIPEMK. At 196 to 208 the chain is on the cytoplasmic side; it reads TILRGVILKEYLT. An intramembrane region (helical) is located at residues 209–224; sequence LKAFVAKVVALTAGLG. The segment at residues 225–230 is an intramembrane region (note=Loop between two helices); that stretch reads SGIPVG. The short motif at 230–234 is the Selectivity filter part_2 element; sequence GKEGP. The segment at residues 231 to 246 is an intramembrane region (helical); sequence KEGPFVHIASICAAVL. Topologically, residues 247–268 are cytoplasmic; sequence SKFMSMFCGVYEQPYYYTDMLT. 2 consecutive intramembrane regions (helical) follow at residues 269–280 and 281–290; these read VGCAVGVGCCFG and TPLGGVLFSI. Residues 291-301 are Cytoplasmic-facing; the sequence is EVTSTYFAVRN. The chain crosses the membrane as a helical span at residues 302 to 321; that stretch reads YWRGFFAATFSAFVFRVLAV. The Extracellular segment spans residues 322–347; it reads WNKDAVTITALFRTNFRMDFPFDLQE. A helical transmembrane segment spans residues 348–376; that stretch reads LPAFAIIGICCGFLGAVFVYLHRQVMLGV. Topologically, residues 377 to 390 are cytoplasmic; sequence RKHKALSQFLAKHR. Residues 391-408 traverse the membrane as a helical segment; the sequence is LLYPGIVTFIIASFTFPP. The Extracellular portion of the chain corresponds to 409–414; that stretch reads GIGQFM. The segment at residues 415 to 418 is an intramembrane region (note=Loop between two helices); sequence AGEL. Residues 419-426 constitute an intramembrane region (helical); the sequence is MPREAIST. Over 427–457 the chain is Extracellular; sequence LFDNNTWVKHVGDPESLGRSAVWIHPRVNVI. The segment at residues 458 to 475 is an intramembrane region (helical); that stretch reads IIIFLFFIMKFWMSIVAT. Residues 476 to 482 constitute an intramembrane region (note=Loop between two helices); the sequence is TMPIPCG. A Selectivity filter part_3 motif is present at residues 482–486; that stretch reads GGFMP. The helical intramembrane region spans 483-498; sequence GFMPVFVLGAAFGRLV. Phe-484 is a chloride binding site. At 499 to 521 the chain is on the extracellular side; sequence GEIMAMLFPDGILFDDIIYKILP. An intramembrane region (helical) is located at residues 522–538; it reads GGYAVIGAAALTGAVSH. An intramembrane region (note=Loop between two helices) is located at residues 539-540; it reads TV. The helical intramembrane region spans 541–554; it reads STAVICFELTGQIA. Over 555–557 the chain is Extracellular; that stretch reads HIL. Positions 558 to 571 form an intramembrane region, helical; the sequence is PMMVAVILANMVAQ. Residues 572–575 constitute an intramembrane region (note=Loop between two helices); it reads SLQP. Residues 576 to 578 constitute an intramembrane region (helical); that stretch reads SLY. Tyr-578 lines the chloride pocket. Over 579–976 the chain is Cytoplasmic; that stretch reads DSIIQVKKLP…DEEDEDELIL (398 aa). The CBS 1 domain occupies 609-668; that stretch reads MVRDVKFVSATCTYGELRTLLQTTTVKTLPLVDSKDSMILLGSVERSELQSLLQRHLGPE. The disordered stretch occupies residues 707–759; it reads DEDEDEDLSGKPELPPLPPPHPLPSAPLSSEESNGPLPSHKQQPEAPEPADQR. Pro residues predominate over residues 719-731; sequence ELPPLPPPHPLPS. Residues 816–871 enclose the CBS 2 domain; that stretch reads IDQSPFQLVEQTSLHKTHTLFSLLGLHLAYVTSMGKLRGVLALEELQKAIEGHTKS. The interval 872 to 976 is disordered; the sequence is GVQLRPPLAS…DEEDEDELIL (105 aa). A Phosphoserine modification is found at Ser-881. A compositionally biased stretch (pro residues) spans 914–925; that stretch reads SPEPPAPSPSPA. 2 stretches are compositionally biased toward acidic residues: residues 938–955 and 967–976; these read ELEELELGESPGLEEELA and DEEDEDELIL.

Belongs to the chloride channel (TC 2.A.49) family. ClC-1/CLCN1 subfamily. Homodimer.

It is found in the cell membrane. The protein localises to the sarcolemma. Its subcellular location is the T-tubule. The enzyme catalyses chloride(in) = chloride(out). It catalyses the reaction thiocyanate(in) = thiocyanate(out). It carries out the reaction bromide(in) = bromide(out). The catalysed reaction is nitrate(in) = nitrate(out). The enzyme catalyses iodide(out) = iodide(in). With respect to regulation, modulated by membrane voltage with depolarization favouring channel opening and hyperpolarization favouring channel closure. Inhibited by acidic pH and ATP binding due to a shift of voltage dependence of common gating to more positive voltages. Inhibited by 9-anthracene-carboxylic. Functionally, voltage-gated chloride channel involved in skeletal muscle excitability. Generates most of the plasma membrane chloride conductance in skeletal muscle fibers, stabilizes the resting membrane potential and contributes to the repolarization phase during action potential firing. Forms a homodimeric channel where each subunit has its own ion conduction pathway. Conducts double-barreled currents controlled by two types of gates, two fast glutamate gates that control each subunit independently and a slow common gate that opens and shuts off both subunits simultaneously. Has a significant open probability at muscle resting potential and is further activated upon membrane depolarization. Permeable to small monovalent anions with ion selectivity for chloride &gt; thiocyanate &gt; bromide &gt; nitrate &gt; iodide. In Canis lupus familiaris (Dog), this protein is Chloride channel protein 1 (CLCN1).